The following is a 1657-amino-acid chain: Endoribonuclease Dicer homolog 4 (1657 aa).

Residues M1–A14 show a composition bias toward low complexity. A disordered region spans residues M1–P26. In terms of domain architecture, Helicase ATP-binding spans L37–R214. ATP is bound at residue L50–T57. A DECH box motif is present at residues D157–H160. The region spanning N400–E567 is the Helicase C-terminal domain. The 91-residue stretch at S585 to K675 folds into the Dicer dsRNA-binding fold domain. The region spanning D856 to V978 is the PAZ domain. 2 RNase III domains span residues D1010–G1173 and I1214–G1358. E1252, D1344, and E1347 together coordinate Mg(2+). The DRBM 1 domain maps to N1384–N1451. Residues G1525–S1556 form a disordered region. Residues N1533 to R1547 show a composition bias toward polar residues. A DRBM 2 domain is found at T1569–Q1645.

It belongs to the helicase family. Dicer subfamily. May interact with ARGONAUTE1 or PINHEAD through their common PAZ domains. Mg(2+) serves as cofactor. Mn(2+) is required as a cofactor. In terms of tissue distribution, expressed in roots, leaf blades, leaf sheaths, shoot apices and spikelets.

The protein resides in the nucleus. In terms of biological role, involved in the RNA silencing pathway. Cleaves double-stranded RNA to produce small interfering RNAs (siRNAs) which target the selective destruction of complementary RNAs. Required for the production of 21 nucleotide siRNAs. Regulates shoot apical meristem (SAM) initiation and maintenance, leaf polarization and lemma polarity through the trans-acting siRNAS (ta-siRNAs) pathway, which probably modulate the expression of the ARF2, ARF3, ARF4, ARF14 and ARF15 genes. Can process endogenous 21 nucleotide siRNAs derived from an imperfect inverted repeat. May not be involved in microRNAs (miRNAs) production. This is Endoribonuclease Dicer homolog 4 (DCL4) from Oryza sativa subsp. japonica (Rice).